A 451-amino-acid chain; its full sequence is Chromosomal replication initiator protein DnaA (451 aa).

Residues 1–72 (MQSIEDIWQE…ANILQEITGR (72 aa)) form a domain I, interacts with DnaA modulators region. The tract at residues 72–108 (RLFDVRFIDGEQEENFEYTVIKPNPALDEDGIEIGKH) is domain II. Residues 109 to 325 (MLNPRYVFDT…GALIRVVAYS (217 aa)) are domain III, AAA+ region. 4 residues coordinate ATP: Gly-153, Gly-155, Lys-156, and Thr-157. The tract at residues 326–451 (SLVNKDITAG…KNLRKSQNMF (126 aa)) is domain IV, binds dsDNA.

The protein belongs to the DnaA family. As to quaternary structure, oligomerizes as a right-handed, spiral filament on DNA at oriC.

It is found in the cytoplasm. Its function is as follows. Plays an essential role in the initiation and regulation of chromosomal replication. ATP-DnaA binds to the origin of replication (oriC) to initiate formation of the DNA replication initiation complex once per cell cycle. Binds the DnaA box (a 9 base pair repeat at the origin) and separates the double-stranded (ds)DNA. Forms a right-handed helical filament on oriC DNA; dsDNA binds to the exterior of the filament while single-stranded (ss)DNA is stabiized in the filament's interior. The ATP-DnaA-oriC complex binds and stabilizes one strand of the AT-rich DNA unwinding element (DUE), permitting loading of DNA polymerase. After initiation quickly degrades to an ADP-DnaA complex that is not apt for DNA replication. Binds acidic phospholipids. This is Chromosomal replication initiator protein DnaA from Listeria welshimeri serovar 6b (strain ATCC 35897 / DSM 20650 / CCUG 15529 / CIP 8149 / NCTC 11857 / SLCC 5334 / V8).